Consider the following 136-residue polypeptide: Large ribosomal subunit protein bL17 (136 aa).

Belongs to the bacterial ribosomal protein bL17 family. Part of the 50S ribosomal subunit. Contacts protein L32.

This chain is Large ribosomal subunit protein bL17, found in Rickettsia canadensis (strain McKiel).